We begin with the raw amino-acid sequence, 98 residues long: Integration host factor subunit alpha (98 aa).

Positions 53–69 are enriched in basic and acidic residues; it reads DLREKNERPGRNPKTGE. Positions 53–72 are disordered; that stretch reads DLREKNERPGRNPKTGEDIP.

This sequence belongs to the bacterial histone-like protein family. In terms of assembly, heterodimer of an alpha and a beta chain.

Its function is as follows. This protein is one of the two subunits of integration host factor, a specific DNA-binding protein that functions in genetic recombination as well as in transcriptional and translational control. The chain is Integration host factor subunit alpha from Vibrio atlanticus (strain LGP32) (Vibrio splendidus (strain Mel32)).